The chain runs to 574 residues: Proline--tRNA ligase (574 aa).

This sequence belongs to the class-II aminoacyl-tRNA synthetase family. ProS type 1 subfamily. In terms of assembly, homodimer.

Its subcellular location is the cytoplasm. It catalyses the reaction tRNA(Pro) + L-proline + ATP = L-prolyl-tRNA(Pro) + AMP + diphosphate. Its function is as follows. Catalyzes the attachment of proline to tRNA(Pro) in a two-step reaction: proline is first activated by ATP to form Pro-AMP and then transferred to the acceptor end of tRNA(Pro). As ProRS can inadvertently accommodate and process non-cognate amino acids such as alanine and cysteine, to avoid such errors it has two additional distinct editing activities against alanine. One activity is designated as 'pretransfer' editing and involves the tRNA(Pro)-independent hydrolysis of activated Ala-AMP. The other activity is designated 'posttransfer' editing and involves deacylation of mischarged Ala-tRNA(Pro). The misacylated Cys-tRNA(Pro) is not edited by ProRS. This is Proline--tRNA ligase from Anaeromyxobacter sp. (strain K).